Consider the following 448-residue polypeptide: Probable glycine dehydrogenase (decarboxylating) subunit 1 (448 aa).

It belongs to the GcvP family. N-terminal subunit subfamily. The glycine cleavage system is composed of four proteins: P, T, L and H. In this organism, the P 'protein' is a heterodimer of two subunits.

The enzyme catalyses N(6)-[(R)-lipoyl]-L-lysyl-[glycine-cleavage complex H protein] + glycine + H(+) = N(6)-[(R)-S(8)-aminomethyldihydrolipoyl]-L-lysyl-[glycine-cleavage complex H protein] + CO2. The glycine cleavage system catalyzes the degradation of glycine. The P protein binds the alpha-amino group of glycine through its pyridoxal phosphate cofactor; CO(2) is released and the remaining methylamine moiety is then transferred to the lipoamide cofactor of the H protein. This is Probable glycine dehydrogenase (decarboxylating) subunit 1 from Listeria monocytogenes serovar 1/2a (strain ATCC BAA-679 / EGD-e).